The following is a 463-amino-acid chain: Histone acetyltransferase mst1 (463 aa).

The Tudor-knot domain occupies 22–74; sequence VYKSKVFAFKDGEYRKAEILMIQKRTRGVVYYVHYNDYNKRLDEWITIDNIDL. Residues 76 to 145 are disordered; the sequence is KGIEYPPPEK…GSNAGNESLP (70 aa). The segment covering 87 to 99 has biased composition (basic residues); sequence KKAHGKGKSSKRP. Residues 111 to 121 are compositionally biased toward low complexity; it reads PSKTEPSTPST. The region spanning 179 to 451 is the MYST-type HAT domain; it reads ARIRNINKIC…NGDLLADWQP (273 aa). The C2HC MYST-type zinc finger occupies 212–237; it reads VYICSFCFCYYGSERQFQRHREKCTL. Residues 262 to 283 carry the ESA1-RPD3 motif motif; sequence RTWCRNICLLSKLFLDHKMLYY. Lys-279 bears the N6-acetyllysine; by autocatalysis mark. Residues 320-324 and 329-335 contribute to the acetyl-CoA site; these read ACILT and QRHGYGK. Glu-355 acts as the Proton donor/acceptor in catalysis. Residue Ser-359 participates in acetyl-CoA binding.

It belongs to the MYST (SAS/MOZ) family. In terms of assembly, component of the NuA4 histone acetyltransferase complex. Interacts with arp4. In terms of processing, autoacetylation at Lys-279 is required for proper function.

Its subcellular location is the nucleus. The protein resides in the chromosome. It carries out the reaction L-lysyl-[histone] + acetyl-CoA = N(6)-acetyl-L-lysyl-[histone] + CoA + H(+). The catalysed reaction is L-lysyl-[protein] + acetyl-CoA = N(6)-acetyl-L-lysyl-[protein] + CoA + H(+). It catalyses the reaction 2-hydroxyisobutanoyl-CoA + L-lysyl-[protein] = N(6)-(2-hydroxyisobutanoyl)-L-lysyl-[protein] + CoA + H(+). The enzyme catalyses (2E)-butenoyl-CoA + L-lysyl-[protein] = N(6)-(2E)-butenoyl-L-lysyl-[protein] + CoA + H(+). In terms of biological role, catalytic component of the NuA4 histone acetyltransferase (HAT) complex which is involved in epigenetic transcriptional activation of selected genes principally by acetylation of nucleosomal histones H4, H3, H2B, H2A and H2A variant H2A.Z. Acetylates histone H4 to form H4K5ac, H4K8ac, H4K12ac and H4K16ac, histone H3 to form H3K14ac, and histone H2A to form H2AK4ac and H2AK7ac. The NuA4 complex is involved in the DNA damage response and is required for chromosome segregation. The NuA4 complex plays a direct role in repair of DNA double-strand breaks (DSBs) through homologous recombination. Recruitment to promoters depends on H3K4me. Also acetylates non-histone proteins. In addition to protein acetyltransferase, can use different acyl-CoA substrates, such as 2-hydroxyisobutanoyl-CoA (2-hydroxyisobutyryl-CoA) or (2E)-butenoyl-CoA (crotonyl-CoA), and is able to mediate protein 2-hydroxyisobutyrylation and crotonylation, respectively. This Schizosaccharomyces pombe (strain 972 / ATCC 24843) (Fission yeast) protein is Histone acetyltransferase mst1.